The primary structure comprises 259 residues: Adenosylcobinamide-GDP ribazoletransferase (259 aa).

A run of 6 helical transmembrane segments spans residues 27–47, 51–71, 100–120, 124–144, 175–195, and 219–239; these read ITFL…ILYI, FSHL…NGLN, VGAG…LSLA, LYIG…SMMI, FLAI…VIVA, and VIGF…IIIA.

Belongs to the CobS family. It depends on Mg(2+) as a cofactor.

Its subcellular location is the cell membrane. The enzyme catalyses alpha-ribazole + adenosylcob(III)inamide-GDP = adenosylcob(III)alamin + GMP + H(+). It catalyses the reaction alpha-ribazole 5'-phosphate + adenosylcob(III)inamide-GDP = adenosylcob(III)alamin 5'-phosphate + GMP + H(+). Its pathway is cofactor biosynthesis; adenosylcobalamin biosynthesis; adenosylcobalamin from cob(II)yrinate a,c-diamide: step 7/7. Its function is as follows. Joins adenosylcobinamide-GDP and alpha-ribazole to generate adenosylcobalamin (Ado-cobalamin). Also synthesizes adenosylcobalamin 5'-phosphate from adenosylcobinamide-GDP and alpha-ribazole 5'-phosphate. In Thermoplasma volcanium (strain ATCC 51530 / DSM 4299 / JCM 9571 / NBRC 15438 / GSS1), this protein is Adenosylcobinamide-GDP ribazoletransferase.